Consider the following 300-residue polypeptide: GTPase Era (300 aa).

Positions 8 to 176 (RCGYVAIVGR…EALIAKHLPE (169 aa)) constitute an Era-type G domain. A G1 region spans residues 16 to 23 (GRPNVGKS). A GTP-binding site is contributed by 16-23 (GRPNVGKS). The G2 stretch occupies residues 42 to 46 (QTTRH). Positions 63-66 (DTPG) are G3. GTP is bound by residues 63–67 (DTPGM) and 125–128 (NKTD). The tract at residues 125–128 (NKTD) is G4. Residues 155-157 (ISA) form a G5 region. The 85-residue stretch at 199–283 (VREKIMRQLG…MLNLWVKVKG (85 aa)) folds into the KH type-2 domain.

The protein belongs to the TRAFAC class TrmE-Era-EngA-EngB-Septin-like GTPase superfamily. Era GTPase family. As to quaternary structure, monomer.

It is found in the cytoplasm. It localises to the cell inner membrane. Functionally, an essential GTPase that binds both GDP and GTP, with rapid nucleotide exchange. Plays a role in 16S rRNA processing and 30S ribosomal subunit biogenesis and possibly also in cell cycle regulation and energy metabolism. The polypeptide is GTPase Era (Pseudomonas putida (strain W619)).